A 325-amino-acid polypeptide reads, in one-letter code: Lipoyl synthase (325 aa).

Positions 72, 77, 83, 98, 102, 105, and 312 each coordinate [4Fe-4S] cluster. In terms of domain architecture, Radical SAM core spans 84–301 (FAGGTATFMI…AEEGERMGFK (218 aa)).

Belongs to the radical SAM superfamily. Lipoyl synthase family. Requires [4Fe-4S] cluster as cofactor.

Its subcellular location is the cytoplasm. It catalyses the reaction [[Fe-S] cluster scaffold protein carrying a second [4Fe-4S](2+) cluster] + N(6)-octanoyl-L-lysyl-[protein] + 2 oxidized [2Fe-2S]-[ferredoxin] + 2 S-adenosyl-L-methionine + 4 H(+) = [[Fe-S] cluster scaffold protein] + N(6)-[(R)-dihydrolipoyl]-L-lysyl-[protein] + 4 Fe(3+) + 2 hydrogen sulfide + 2 5'-deoxyadenosine + 2 L-methionine + 2 reduced [2Fe-2S]-[ferredoxin]. The protein operates within protein modification; protein lipoylation via endogenous pathway; protein N(6)-(lipoyl)lysine from octanoyl-[acyl-carrier-protein]: step 2/2. In terms of biological role, catalyzes the radical-mediated insertion of two sulfur atoms into the C-6 and C-8 positions of the octanoyl moiety bound to the lipoyl domains of lipoate-dependent enzymes, thereby converting the octanoylated domains into lipoylated derivatives. This is Lipoyl synthase from Azotobacter vinelandii (strain DJ / ATCC BAA-1303).